A 747-amino-acid polypeptide reads, in one-letter code: Threonine synthase-like 1 (747 aa).

K351 is modified (N6-(pyridoxal phosphate)lysine).

This sequence belongs to the threonine synthase family. Requires pyridoxal 5'-phosphate as cofactor.

The polypeptide is Threonine synthase-like 1 (Thnsl1) (Mus musculus (Mouse)).